Reading from the N-terminus, the 502-residue chain is 4,4'-diapophytoene desaturase (4,4'-diaponeurosporene-forming) (502 aa).

5–17 contributes to the FAD binding site; that stretch reads VIGAGVTGLAAAA.

It belongs to the carotenoid/retinoid oxidoreductase family. CrtN subfamily.

The catalysed reaction is 15-cis-4,4'-diapophytoene + 3 FAD + 3 H(+) = all-trans-4,4'-diaponeurosporene + 3 FADH2. Its pathway is carotenoid biosynthesis; staphyloxanthin biosynthesis; staphyloxanthin from farnesyl diphosphate: step 2/5. Functionally, involved in the biosynthesis of the yellow-orange carotenoid staphyloxanthin, which plays a role in the virulence via its protective function against oxidative stress. Catalyzes three successive dehydrogenation reactions that lead to the introduction of three double bonds into 4,4'-diapophytoene (dehydrosqualene), with 4,4'-diapophytofluene and 4,4'-diapo-zeta-carotene as intermediates, and 4,4'-diaponeurosporene (the major deep-yellow pigment in staphylococci strains) as the end product. This is 4,4'-diapophytoene desaturase (4,4'-diaponeurosporene-forming) from Staphylococcus aureus (strain MW2).